A 382-amino-acid polypeptide reads, in one-letter code: MSHKDLTSGEPAGRPKPRVAVLFGGRSSEHAVSCVTAAGVLGAINKDKYDVIPIGIAKSGQWVLAGGDTAQWSLAGKALPEVAPSEQTVTLAEIGGEHQLIVAAPNEVPQELGTVDVVFPLLHGPFGEDGTIQGLLELSDTRYVGAGVLASAVGMDKHFMKVVFESAGLHVGPYVAVTDRQWQKDPEAVRKQVDRLGFPVFVKPARAGSSMGISKVDSLEGLDAAIEEARRHDLKLVIEAGIVGREIECAVLEGRGTDAPRTSLPGEISVAGGGHEFYDFNAKYVEDDAASLSCPADIPDEAIARVRELAAAAFDAVGAEGLSRVDFFYTPDGDLIINEINTMPGFTPKSMYPQMWAKSGLGYAELIDELIHLALNRKTGLR.

An ATP-grasp domain is found at K161 to H372. V193 to E248 contacts ATP. The Mg(2+) site is built by D326, E339, and N341.

This sequence belongs to the D-alanine--D-alanine ligase family. The cofactor is Mg(2+). Mn(2+) is required as a cofactor.

Its subcellular location is the cytoplasm. It carries out the reaction 2 D-alanine + ATP = D-alanyl-D-alanine + ADP + phosphate + H(+). Its pathway is cell wall biogenesis; peptidoglycan biosynthesis. Its function is as follows. Cell wall formation. The protein is D-alanine--D-alanine ligase of Pseudarthrobacter chlorophenolicus (strain ATCC 700700 / DSM 12829 / CIP 107037 / JCM 12360 / KCTC 9906 / NCIMB 13794 / A6) (Arthrobacter chlorophenolicus).